Here is a 269-residue protein sequence, read N- to C-terminus: Fructose permease IIC component (269 aa).

Residues 1-234 enclose the PTS EIIC type-4 domain; the sequence is MSSLQIILLL…GALGLCLALL (234 aa). 7 helical membrane passes run 2 to 22, 35 to 54, 64 to 86, 90 to 110, 149 to 169, 181 to 201, and 206 to 226; these read SSLQ…ASVL, TLVG…GGTL, VGLA…VITA, IGEG…LTIF, VMIP…AFLG, IGGG…MNIP, and FFYI…GFGA.

The protein localises to the cell membrane. The phosphoenolpyruvate-dependent sugar phosphotransferase system (PTS), a major carbohydrate active -transport system, catalyzes the phosphorylation of incoming sugar substrates concomitant with their translocation across the cell membrane. This system is involved in fructose transport. This is Fructose permease IIC component (levF) from Bacillus subtilis (strain 168).